The sequence spans 264 residues: S-adenosylmethionine decarboxylase proenzyme (264 aa).

Catalysis depends on serine 113, which acts as the Schiff-base intermediate with substrate; via pyruvic acid. At serine 113 the chain carries Pyruvic acid (Ser); by autocatalysis. The Proton acceptor; for processing activity role is filled by histidine 118. The active-site Proton donor; for catalytic activity is the cysteine 141.

It belongs to the prokaryotic AdoMetDC family. Type 2 subfamily. As to quaternary structure, heterooctamer of four alpha and four beta chains arranged as a tetramer of alpha/beta heterodimers. It depends on pyruvate as a cofactor. Post-translationally, is synthesized initially as an inactive proenzyme. Formation of the active enzyme involves a self-maturation process in which the active site pyruvoyl group is generated from an internal serine residue via an autocatalytic post-translational modification. Two non-identical subunits are generated from the proenzyme in this reaction, and the pyruvate is formed at the N-terminus of the alpha chain, which is derived from the carboxyl end of the proenzyme. The post-translation cleavage follows an unusual pathway, termed non-hydrolytic serinolysis, in which the side chain hydroxyl group of the serine supplies its oxygen atom to form the C-terminus of the beta chain, while the remainder of the serine residue undergoes an oxidative deamination to produce ammonia and the pyruvoyl group blocking the N-terminus of the alpha chain.

It carries out the reaction S-adenosyl-L-methionine + H(+) = S-adenosyl 3-(methylsulfanyl)propylamine + CO2. The protein operates within amine and polyamine biosynthesis; S-adenosylmethioninamine biosynthesis; S-adenosylmethioninamine from S-adenosyl-L-methionine: step 1/1. Catalyzes the decarboxylation of S-adenosylmethionine to S-adenosylmethioninamine (dcAdoMet), the propylamine donor required for the synthesis of the polyamines spermine and spermidine from the diamine putrescine. The chain is S-adenosylmethionine decarboxylase proenzyme from Pseudomonas syringae pv. tomato (strain ATCC BAA-871 / DC3000).